Here is a 546-residue protein sequence, read N- to C-terminus: Chaperonin GroEL 2 (546 aa).

ATP contacts are provided by residues 30-33, K51, 87-91, G415, 479-481, and D495; these read TLGP, DGTTT, and NAA. The tract at residues 524–546 is disordered; sequence APKDAPPAAPAGVPGAGGPGFDF. The segment covering 537–546 has biased composition (gly residues); sequence PGAGGPGFDF.

Belongs to the chaperonin (HSP60) family. In terms of assembly, forms a cylinder of 14 subunits composed of two heptameric rings stacked back-to-back. Interacts with the co-chaperonin GroES.

It localises to the cytoplasm. The enzyme catalyses ATP + H2O + a folded polypeptide = ADP + phosphate + an unfolded polypeptide.. Functionally, together with its co-chaperonin GroES, plays an essential role in assisting protein folding. The GroEL-GroES system forms a nano-cage that allows encapsulation of the non-native substrate proteins and provides a physical environment optimized to promote and accelerate protein folding. In Burkholderia pseudomallei (strain 1710b), this protein is Chaperonin GroEL 2.